We begin with the raw amino-acid sequence, 336 residues long: Holliday junction branch migration complex subunit RuvB (336 aa).

A large ATPase domain (RuvB-L) region spans residues 4-184 (ADRLISAGTT…FGIVQRLEFY (181 aa)). ATP-binding positions include Ile-23, Arg-24, Gly-65, Lys-68, Thr-69, Thr-70, 131 to 133 (EDY), Arg-174, Tyr-184, and Arg-221. Thr-69 serves as a coordination point for Mg(2+). The segment at 185 to 255 (QVPDLQYIVS…IAAQALDMLN (71 aa)) is small ATPAse domain (RuvB-S). A head domain (RuvB-H) region spans residues 258-336 (AEGFDYMDRK…HFGITPPEMP (79 aa)). Residues Arg-294, Arg-313, and Arg-318 each contribute to the DNA site.

Belongs to the RuvB family. Homohexamer. Forms an RuvA(8)-RuvB(12)-Holliday junction (HJ) complex. HJ DNA is sandwiched between 2 RuvA tetramers; dsDNA enters through RuvA and exits via RuvB. An RuvB hexamer assembles on each DNA strand where it exits the tetramer. Each RuvB hexamer is contacted by two RuvA subunits (via domain III) on 2 adjacent RuvB subunits; this complex drives branch migration. In the full resolvosome a probable DNA-RuvA(4)-RuvB(12)-RuvC(2) complex forms which resolves the HJ.

The protein resides in the cytoplasm. It carries out the reaction ATP + H2O = ADP + phosphate + H(+). Its function is as follows. The RuvA-RuvB-RuvC complex processes Holliday junction (HJ) DNA during genetic recombination and DNA repair, while the RuvA-RuvB complex plays an important role in the rescue of blocked DNA replication forks via replication fork reversal (RFR). RuvA specifically binds to HJ cruciform DNA, conferring on it an open structure. The RuvB hexamer acts as an ATP-dependent pump, pulling dsDNA into and through the RuvAB complex. RuvB forms 2 homohexamers on either side of HJ DNA bound by 1 or 2 RuvA tetramers; 4 subunits per hexamer contact DNA at a time. Coordinated motions by a converter formed by DNA-disengaged RuvB subunits stimulates ATP hydrolysis and nucleotide exchange. Immobilization of the converter enables RuvB to convert the ATP-contained energy into a lever motion, pulling 2 nucleotides of DNA out of the RuvA tetramer per ATP hydrolyzed, thus driving DNA branch migration. The RuvB motors rotate together with the DNA substrate, which together with the progressing nucleotide cycle form the mechanistic basis for DNA recombination by continuous HJ branch migration. Branch migration allows RuvC to scan DNA until it finds its consensus sequence, where it cleaves and resolves cruciform DNA. This is Holliday junction branch migration complex subunit RuvB from Escherichia coli O17:K52:H18 (strain UMN026 / ExPEC).